The sequence spans 131 residues: Fluoride-specific ion channel FluC (131 aa).

Transmembrane regions (helical) follow at residues 3 to 23 (AAANLPAFLAVGAGAALGAWL), 34 to 54 (IFLTIPFGTLAANLLGGLLMG), and 62 to 82 (AVPAMSPVLKLLLTTGFLGGL). Residues G80 and T83 each coordinate Na(+). A helical membrane pass occupies residues 101–121 (WGWLALHAAVHVAGSLLMAWI).

The protein belongs to the fluoride channel Fluc/FEX (TC 1.A.43) family.

It is found in the cell inner membrane. It catalyses the reaction fluoride(in) = fluoride(out). Its activity is regulated as follows. Na(+) is not transported, but it plays an essential structural role and its presence is essential for fluoride channel function. Functionally, fluoride-specific ion channel. Important for reducing fluoride concentration in the cell, thus reducing its toxicity. This Aromatoleum aromaticum (strain DSM 19018 / LMG 30748 / EbN1) (Azoarcus sp. (strain EbN1)) protein is Fluoride-specific ion channel FluC.